Consider the following 1386-residue polypeptide: YLP motif-containing protein 1 (1386 aa).

Disordered stretches follow at residues 1–336 and 517–1068; these read MYPN…EDAR and TSIP…PPGR. Residues 14 to 27 are compositionally biased toward pro residues; it reads YPPPPVPPPPPPVA. Low complexity-rich tracts occupy residues 31-50 and 59-80; these read ASPG…SSSG and LAQL…LQPH. 5 stretches are compositionally biased toward pro residues: residues 81–93, 102–114, 148–158, 166–176, and 184–203; these read HLPP…PPVM, QPPP…PPGP, PESPPVPPGSY, MPPPQPPPSYY, and YLPP…PPSI. Polar residues predominate over residues 237-259; sequence STMTPQEQQQYWYRQHLLSLQQR. Positions 260–270 are enriched in basic residues; that stretch reads TKVHLPGHKKG. Residues 276 to 285 show a composition bias toward basic and acidic residues; it reads DVPEPIKEEA. The span at 302–317 shows a compositional bias: pro residues; it reads PPLPPPNEEAPPPLSP. Positions 320–333 are enriched in acidic residues; it reads PQSEDSEDSEDSEE. Composition is skewed to pro residues over residues 517–558, 566–603, and 641–650; these read TSIP…PPPA, PVLP…PQGM, and PPSPYHPPPQ. Positions 651–667 are enriched in polar residues; the sequence is SEQVNSKPLNKVFSSEQ. Position 683 is an N6-methyllysine (lysine 683). Residues 706–722 are compositionally biased toward basic and acidic residues; it reads RGPREQKEQLQKLKDFG. Residues 746-761 show a composition bias toward pro residues; it reads MYPPPGSYRPPPPMGK. The segment covering 762 to 779 has biased composition (low complexity); that stretch reads PPGSIVRPSAPPARSSIP. 2 stretches are compositionally biased toward pro residues: residues 781–803 and 848–878; these read TRPP…PPPV and PVLP…PPPV. Lysine 894 is covalently cross-linked (Glycyl lysine isopeptide (Lys-Gly) (interchain with G-Cter in SUMO2)). Basic and acidic residues-rich tracts occupy residues 904–938, 945–1014, 1023–1033, and 1049–1068; these read ITLR…EPYF, TDHR…DRPP, GERRTYPEERM, and RVEK…PPGR. Residue lysine 951 forms a Glycyl lysine isopeptide (Lys-Gly) (interchain with G-Cter in SUMO2) linkage. Residues 1336–1343 are involved in interaction with PPP1CA; sequence KKRVRWAD.

As to quaternary structure, interacts with PPP1CA and NCOA5. Forms a complex with ILF2, ILF3, KHDRBS1, RBMX, NCOA5 and PPP1CA.

Its subcellular location is the nucleus. The protein resides in the nucleus speckle. Functionally, plays a role in the reduction of telomerase activity during differentiation of embryonic stem cells by binding to the core promoter of TERT and controlling its down-regulation. The polypeptide is YLP motif-containing protein 1 (Ylpm1) (Mus musculus (Mouse)).